The primary structure comprises 517 residues: Bifunctional purine biosynthesis protein PurH (517 aa).

Residues 1-145 (MSPLALVSVS…KNHADVAVLV (145 aa)) form the MGS-like domain.

It belongs to the PurH family.

The enzyme catalyses (6R)-10-formyltetrahydrofolate + 5-amino-1-(5-phospho-beta-D-ribosyl)imidazole-4-carboxamide = 5-formamido-1-(5-phospho-D-ribosyl)imidazole-4-carboxamide + (6S)-5,6,7,8-tetrahydrofolate. The catalysed reaction is IMP + H2O = 5-formamido-1-(5-phospho-D-ribosyl)imidazole-4-carboxamide. It participates in purine metabolism; IMP biosynthesis via de novo pathway; 5-formamido-1-(5-phospho-D-ribosyl)imidazole-4-carboxamide from 5-amino-1-(5-phospho-D-ribosyl)imidazole-4-carboxamide (10-formyl THF route): step 1/1. The protein operates within purine metabolism; IMP biosynthesis via de novo pathway; IMP from 5-formamido-1-(5-phospho-D-ribosyl)imidazole-4-carboxamide: step 1/1. This chain is Bifunctional purine biosynthesis protein PurH, found in Prochlorococcus marinus (strain MIT 9515).